The primary structure comprises 318 residues: Basic leucine zipper (bZIP) transcription factor atfB (318 aa).

Disordered stretches follow at residues 79–100 (LKNT…KKLQ) and 114–164 (FNSS…EKRE). The tract at residues 160–199 (REKREKFLERNRLAASKCRQKKKEHTKLLETRFREVSSKK) is basic motif. Residues 160–223 (REKREKFLER…LNLKNEMLRH (64 aa)) enclose the bZIP domain. A leucine-zipper region spans residues 202–216 (LESEIEHLRSEVLNL). Positions 247–304 (TPNRDLVSPMRSPEQMTASTPHGLSFGFDGPMQLPSEMGSPLDQRRDSEQSIMTESSY) are disordered.

The protein belongs to the bZIP family. ATF subfamily.

Its subcellular location is the nucleus. Functionally, transcription factor that acts as a key player in the regulatory circuit that integrates secondary metabolism and cellular response to oxidative stress. Regulates the genes involved in development, stress response, and secondary metabolism through direct binding to their promoters. Particularly involved in the resistance to oxidative stress in asexual conidiospores. Binds aflatoxin gene promoters carrying the cAMP-response element (CRE1) under aflatoxin-inducing conditions. The polypeptide is Basic leucine zipper (bZIP) transcription factor atfB (Aspergillus parasiticus (strain ATCC 56775 / NRRL 5862 / SRRC 143 / SU-1)).